A 254-amino-acid polypeptide reads, in one-letter code: Ubiquinone biosynthesis O-methyltransferase (254 aa).

Residues Arg-47, Gly-78, Asp-99, and Met-141 each contribute to the S-adenosyl-L-methionine site.

The protein belongs to the methyltransferase superfamily. UbiG/COQ3 family.

The enzyme catalyses a 3-demethylubiquinol + S-adenosyl-L-methionine = a ubiquinol + S-adenosyl-L-homocysteine + H(+). It carries out the reaction a 3-(all-trans-polyprenyl)benzene-1,2-diol + S-adenosyl-L-methionine = a 2-methoxy-6-(all-trans-polyprenyl)phenol + S-adenosyl-L-homocysteine + H(+). The protein operates within cofactor biosynthesis; ubiquinone biosynthesis. In terms of biological role, O-methyltransferase that catalyzes the 2 O-methylation steps in the ubiquinone biosynthetic pathway. The protein is Ubiquinone biosynthesis O-methyltransferase of Rhodopseudomonas palustris (strain BisB18).